The primary structure comprises 390 residues: MTNTKKSKQKNTVGNKVKKTNTNKNNNNNNNNNNKNKQNKINNKNNKNNKNNDSNNKNNNTNNKNNINIKNKNLKKVENNKSLKVISSNKNKNILNNLKKEEKVNSNDILIQQQQNREKEDITNEDDDEKYNLWNPKPTSSVSVSSSKSSKSLKTTDLQNEMSEKLKGSRFRWLNETLYTTHSKEAFKEFSEDRSLFDQYHSGFKSQVESWPINPLDLIIDDLSSIKQRKRIADLGCGEAKLAERLQHKHTIQSFDLVAVNERVTACDISNLPLKNESIDIAVFCLSLMGTNFIDFIIEAERVLVKGGLLKIAEIESRITDINAFTNEIQQHGFNLIKKNEQNQYFTLFEFSKLQKKDQQFMRSLKQYQKLKKQQATNEPVLKPCLYKKR.

Disordered regions lie at residues 1 to 85 and 106 to 160; these read MTNT…SLKV and SNDI…DLQN. 2 stretches are compositionally biased toward low complexity: residues 22 to 71 and 140 to 152; these read TNKN…NIKN and SSVS…SSKS. S-adenosyl-L-methionine contacts are provided by His201, Gly236, Asp256, Asp268, and Cys285.

It belongs to the methyltransferase superfamily. RRP8 family.

Its subcellular location is the nucleus. The protein resides in the nucleolus. Probable methyltransferase required to silence rDNA. This Dictyostelium discoideum (Social amoeba) protein is Ribosomal RNA-processing protein 8 (rrp8).